A 486-amino-acid polypeptide reads, in one-letter code: Glycogen synthase 2 (486 aa).

Lys15 contributes to the ADP-alpha-D-glucose binding site.

It belongs to the glycosyltransferase 1 family. Bacterial/plant glycogen synthase subfamily.

It catalyses the reaction [(1-&gt;4)-alpha-D-glucosyl](n) + ADP-alpha-D-glucose = [(1-&gt;4)-alpha-D-glucosyl](n+1) + ADP + H(+). Its pathway is glycan biosynthesis; glycogen biosynthesis. Its function is as follows. Synthesizes alpha-1,4-glucan chains using ADP-glucose. The sequence is that of Glycogen synthase 2 (glgA2) from Rhizobium meliloti (strain 1021) (Ensifer meliloti).